The following is a 423-amino-acid chain: CinA-like protein (423 aa).

Belongs to the CinA family.

This chain is CinA-like protein, found in Chlorobaculum tepidum (strain ATCC 49652 / DSM 12025 / NBRC 103806 / TLS) (Chlorobium tepidum).